We begin with the raw amino-acid sequence, 257 residues long: 5'-nucleotidase SurE (257 aa).

Residues aspartate 8, aspartate 9, serine 40, and asparagine 92 each coordinate a divalent metal cation.

It belongs to the SurE nucleotidase family. The cofactor is a divalent metal cation.

It is found in the cytoplasm. The enzyme catalyses a ribonucleoside 5'-phosphate + H2O = a ribonucleoside + phosphate. In terms of biological role, nucleotidase that shows phosphatase activity on nucleoside 5'-monophosphates. In Rhizobium rhizogenes (strain K84 / ATCC BAA-868) (Agrobacterium radiobacter), this protein is 5'-nucleotidase SurE.